The sequence spans 286 residues: Bifunctional protein FolD (286 aa).

NADP(+)-binding positions include 164 to 166 (GAS), Ile189, and Ile230.

Belongs to the tetrahydrofolate dehydrogenase/cyclohydrolase family. In terms of assembly, homodimer.

It catalyses the reaction (6R)-5,10-methylene-5,6,7,8-tetrahydrofolate + NADP(+) = (6R)-5,10-methenyltetrahydrofolate + NADPH. It carries out the reaction (6R)-5,10-methenyltetrahydrofolate + H2O = (6R)-10-formyltetrahydrofolate + H(+). It functions in the pathway one-carbon metabolism; tetrahydrofolate interconversion. Functionally, catalyzes the oxidation of 5,10-methylenetetrahydrofolate to 5,10-methenyltetrahydrofolate and then the hydrolysis of 5,10-methenyltetrahydrofolate to 10-formyltetrahydrofolate. The sequence is that of Bifunctional protein FolD from Wolinella succinogenes (strain ATCC 29543 / DSM 1740 / CCUG 13145 / JCM 31913 / LMG 7466 / NCTC 11488 / FDC 602W) (Vibrio succinogenes).